Consider the following 736-residue polypeptide: Transcription factor E2F8 (736 aa).

Positions 1-26 are disordered; it reads MEEGSKENCGFNGSPMGSRSPPKQLT. Over residues 15–26 the composition is skewed to polar residues; it reads PMGSRSPPKQLT. 2 DNA-binding regions span residues 98–167 and 240–326; these read RKEK…IWHG and RKEK…QWTC. 4 disordered regions span residues 386-405, 435-456, 483-551, and 716-736; these read RRKI…GSSS, SACK…QTPT, EQTL…AVDD, and PGGM…GTDD. Residues 393–405 are compositionally biased toward low complexity; the sequence is PSSPIKSGDGSSS. 2 stretches are compositionally biased toward basic and acidic residues: residues 509-539 and 726-736; these read GRHE…DRGC and SARKLDVGTDD.

This sequence belongs to the E2F/DP family. In terms of assembly, homodimer and heterodimer: mainly forms homodimers and, to a lesser extent, heterodimers with e2f7.

It localises to the nucleus. Atypical E2F transcription factor that participates in various processes such as angiogenesis and polyploidization of specialized cells. Mainly acts as a transcription repressor that binds DNA independently of DP proteins and specifically recognizes the E2 recognition site 5'-TTTC[CG]CGC-3'. Directly represses transcription of classical E2F transcription factors such as e2f1. Acts as a regulator of S-phase by recognizing and binding the E2-related site 5'-TTCCCGCC-3' and mediating repression of G1/S-regulated genes. Acts as a promoter of sprouting angiogenesis, possibly by acting as a transcription activator. This is Transcription factor E2F8 (e2f8) from Xenopus tropicalis (Western clawed frog).